Consider the following 422-residue polypeptide: uncharacterized protein (422 aa).

Disordered regions lie at residues 1–21 (MRDNIAKGITAGSNTQQTTYD), 158–218 (TAKS…TEQV), and 246–271 (DFGTAPSSSGSGTQDGTPTPWTPWLT). The span at 11–21 (AGSNTQQTTYD) shows a compositional bias: polar residues. Over residues 170 to 199 (SKSSNGSSSTSTTQRGGSSNENKVKALQVA) the composition is skewed to low complexity. 2 stretches are compositionally biased toward polar residues: residues 205-216 (GSQGNSGDQGTE) and 250-261 (APSSSGSGTQDG). Low complexity predominate over residues 262–271 (TPTPWTPWLT).

It belongs to the adhesin P1 family.

This is an uncharacterized protein from Mycoplasma pneumoniae (strain ATCC 29342 / M129 / Subtype 1) (Mycoplasmoides pneumoniae).